Here is a 117-residue protein sequence, read N- to C-terminus: MVTPRMLSALSAVLLLVLTASSSARSFDASPSATSGNHSLNKRSLFDPACTGIYDRQLLRKLGRLCDDCYNVFREPKVATGCRSNCYHNLIFLDCLEYLIPSHLQEEHMAAMQTVGK.

Positions 1–24 (MVTPRMLSALSAVLLLVLTASSSA) are cleaved as a signal peptide. Cystine bridges form between C50–C86, C66–C82, and C69–C95. V115 is modified (valine amide).

The protein belongs to the arthropod CHH/MIH/GIH/VIH hormone family. Produced by the medulla terminalis X-organ in the eyestalks and transported to the sinus gland where they are stored and released.

It is found in the secreted. Hormone found in the sinus gland of isopods and decapods which controls the blood sugar level. Has a secretagogue action over the amylase released from the midgut gland. May act as a stress hormone and may be involved in the control of molting and reproduction. In Penaeus japonicus (Kuruma prawn), this protein is Crustacean hyperglycemic hormones 3.